The chain runs to 118 residues: MICOS complex subunit MIC13 (118 aa).

Over 1 to 7 (MVPRVWS) the chain is Mitochondrial matrix. The helical transmembrane segment at 8-26 (LMRFLIKGSVAGGAIYLVY) threads the bilayer. Over 27–118 (DQDPLGPSDK…GWEYLKERTK (92 aa)) the chain is Mitochondrial intermembrane.

The protein belongs to the MICOS complex subunit Mic13 family. In terms of assembly, component of the mitochondrial contact site and cristae organizing system (MICOS) complex, composed of at least MICOS10/MIC10, CHCHD3/MIC19, CHCHD6/MIC25, APOO/MIC26, MICOS13/MIC13, APOOL/MIC27 and IMMT/MIC60. The MICOS complex associates with mitochondrial outer membrane proteins SAMM50, MTX1 and MTX2 (together described as components of the mitochondrial outer membrane sorting assembly machinery (SAM) complex) and DNAJC11, mitochondrial inner membrane protein TMEM11 and with HSPA9. The MICOS and SAM complexes together with DNAJC11 are part of a large protein complex spanning both membranes termed the mitochondrial intermembrane space bridging (MIB) complex.

It localises to the mitochondrion inner membrane. Functionally, component of the MICOS complex, a large protein complex of the mitochondrial inner membrane that plays crucial roles in the maintenance of crista junctions, inner membrane architecture, and formation of contact sites to the outer membrane. Constituent of mature MICOS complex, it is required for the formation of cristae junction (CJ) and maintenance of cristae morphology. Required for the incorporation of MICOS10/MIC10 into the MICOS complex. This Sus scrofa (Pig) protein is MICOS complex subunit MIC13.